Here is a 157-residue protein sequence, read N- to C-terminus: Phosphopantetheine adenylyltransferase (157 aa).

T8 provides a ligand contact to substrate. Residues 8–9 (TF) and H16 contribute to the ATP site. Residues K40, T72, and R86 each coordinate substrate. Residues 87–89 (GLR), E97, and 122–128 (YSFLSSS) each bind ATP.

This sequence belongs to the bacterial CoaD family. In terms of assembly, homohexamer. It depends on Mg(2+) as a cofactor.

The protein localises to the cytoplasm. The catalysed reaction is (R)-4'-phosphopantetheine + ATP + H(+) = 3'-dephospho-CoA + diphosphate. It participates in cofactor biosynthesis; coenzyme A biosynthesis; CoA from (R)-pantothenate: step 4/5. Reversibly transfers an adenylyl group from ATP to 4'-phosphopantetheine, yielding dephospho-CoA (dPCoA) and pyrophosphate. This Prochlorococcus marinus (strain AS9601) protein is Phosphopantetheine adenylyltransferase.